The sequence spans 300 residues: Tyrosine recombinase XerD (300 aa).

The 84-residue stretch at 6–89 (LFHKRLIEQF…ALKVFFHFLK (84 aa)) folds into the Core-binding (CB) domain. The region spanning 108-293 (RLPSILSTEE…ASESLIEKFH (186 aa)) is the Tyr recombinase domain. Active-site residues include R152, K174, H245, R248, and H271. The active-site O-(3'-phospho-DNA)-tyrosine intermediate is Y280.

The protein belongs to the 'phage' integrase family. XerD subfamily. As to quaternary structure, forms a cyclic heterotetrameric complex composed of two molecules of XerC and two molecules of XerD.

It localises to the cytoplasm. In terms of biological role, site-specific tyrosine recombinase, which acts by catalyzing the cutting and rejoining of the recombining DNA molecules. The XerC-XerD complex is essential to convert dimers of the bacterial chromosome into monomers to permit their segregation at cell division. It also contributes to the segregational stability of plasmids. The sequence is that of Tyrosine recombinase XerD from Chlamydia trachomatis serovar D (strain ATCC VR-885 / DSM 19411 / UW-3/Cx).